Reading from the N-terminus, the 303-residue chain is Cytoplasmic envelopment protein 1 (303 aa).

The protein belongs to the herpesviridae cytoplasmic envelopment protein 1 family.

The protein resides in the virion. The protein localises to the virion tegument. It localises to the host cytoplasm. Its subcellular location is the host Golgi apparatus. Plays a critical role in cytoplasmic virus egress. Participates in the final step of tegumentation and envelope acquisition within the host cytoplasm. This chain is Cytoplasmic envelopment protein 1, found in Equine herpesvirus 1 (strain Ab4p) (EHV-1).